The primary structure comprises 562 residues: Cell division protein FtsZ (562 aa).

Residues 23–27 (GAGGN), 110–112 (GTG), Glu-141, Arg-145, and Asp-189 each bind GTP. Over residues 404–413 (PAAARPAQQP) the composition is skewed to low complexity. Disordered stretches follow at residues 404-428 (PAAA…RLDP) and 462-562 (ETAQ…RQAN). The span at 418–428 (FRPDPQLRLDP) shows a compositional bias: basic and acidic residues. Low complexity-rich tracts occupy residues 464–486 (AQAA…QPQR) and 500–510 (GLLRRPAAAQP).

Belongs to the FtsZ family. As to quaternary structure, homodimer. Polymerizes to form a dynamic ring structure in a strictly GTP-dependent manner. Interacts directly with several other division proteins. Interacts with FtsZ-like protein (also called FtsZm).

The protein localises to the cytoplasm. Functionally, essential cell division protein that forms a contractile ring structure (Z ring) at the future cell division site. The regulation of the ring assembly controls the timing and the location of cell division. One of the functions of the FtsZ ring is to recruit other cell division proteins to the septum to produce a new cell wall between the dividing cells. Binds GTP and shows GTPase activity. Mild overexpression impairs cell division, leading to very elongated cells. Isolated protein forms filaments and bundles in the presence of GTP. This chain is Cell division protein FtsZ, found in Magnetospirillum gryphiswaldense (strain DSM 6361 / JCM 21280 / NBRC 15271 / MSR-1).